A 159-amino-acid polypeptide reads, in one-letter code: MEEGLLVRKIREGTVIDHIPAGRALNVLKILGLTGREGLTIAVVMNVPSRKLGVKDIVKVEKRFLEPSEVDKIALIAPSATINIIRDFQVASKRRVEPPAVVTGILRCPNPNCVTNSEREPVTPRFVRVSLSPLKLKCAYCEETLSEAEIVDQLVSPYG.

Residues cysteine 108, cysteine 113, cysteine 138, and cysteine 141 each coordinate Zn(2+).

Belongs to the PyrI family. Contains catalytic and regulatory chains. Zn(2+) serves as cofactor.

Its function is as follows. Involved in allosteric regulation of aspartate carbamoyltransferase. The chain is Aspartate carbamoyltransferase regulatory chain from Thermofilum pendens (strain DSM 2475 / Hrk 5).